Reading from the N-terminus, the 292-residue chain is Elongation factor Ts (292 aa).

Residues 82–85 (TDFV) are involved in Mg(2+) ion dislocation from EF-Tu.

Belongs to the EF-Ts family.

The protein resides in the cytoplasm. Its function is as follows. Associates with the EF-Tu.GDP complex and induces the exchange of GDP to GTP. It remains bound to the aminoacyl-tRNA.EF-Tu.GTP complex up to the GTP hydrolysis stage on the ribosome. The protein is Elongation factor Ts of Bordetella avium (strain 197N).